Reading from the N-terminus, the 105-residue chain is Probable non-functional immunoglobulin lambda variable 5-48 (105 aa).

The N-terminal stretch at 1 to 19 is a signal peptide; sequence MAWTPLLLLFLSHCTGSLS. The segment at 20–44 is framework-1; it reads QAVLTQPTSLSASPGASARLTCTLR. The Ig-like domain maps to 20–105; it reads QAVLTQPTSL…NAGILFISGL (86 aa). The tract at residues 45 to 53 is complementarity-determining-1; the sequence is SGISVGSYR. The framework-2 stretch occupies residues 54–70; that stretch reads IYWYQQKPGSPPRYLLN. Positions 71–77 are complementarity-determining-2; that stretch reads YYSDSDK. The tract at residues 78 to 105 is framework-3; that stretch reads HQGSGVPSRFSGSKDASTNAGILFISGL.

As to quaternary structure, immunoglobulins are composed of two identical heavy chains and two identical light chains; disulfide-linked.

The protein localises to the secreted. It is found in the cell membrane. In terms of biological role, probable non-functional open reading frame (ORF) of V region of the variable domain of immunoglobulin light chains. Non-functional ORF generally cannot participate in the synthesis of a productive immunoglobulin chain due to altered V-(D)-J or switch recombination and/or splicing site (at mRNA level) and/or conserved amino acid change (protein level). Immunoglobulins, also known as antibodies, are membrane-bound or secreted glycoproteins produced by B lymphocytes. In the recognition phase of humoral immunity, the membrane-bound immunoglobulins serve as receptors which, upon binding of a specific antigen, trigger the clonal expansion and differentiation of B lymphocytes into immunoglobulins-secreting plasma cells. Secreted immunoglobulins mediate the effector phase of humoral immunity, which results in the elimination of bound antigens. The antigen binding site is formed by the variable domain of one heavy chain, together with that of its associated light chain. Thus, each immunoglobulin has two antigen binding sites with remarkable affinity for a particular antigen. The variable domains are assembled by a process called V-(D)-J rearrangement and can then be subjected to somatic hypermutations which, after exposure to antigen and selection, allow affinity maturation for a particular antigen. The sequence is that of Probable non-functional immunoglobulin lambda variable 5-48 from Homo sapiens (Human).